The primary structure comprises 638 residues: MDLWQLLLTLALAGSSDAFSGSEATAAILSRAPWSLQSVNPGLKTNSSKEPKFTKCRSPERETFSCHWTDEVHHGTKNLGPIQLFYTRRNTQEWTQEWKECPDYVSAGENSCYFNSSFTSIWIPYCIKLTSNGGTVDEKCFSVDEIVQPDPPIALNWTLLNVSLTGIHADIQVRWEAPRNADIQKGWMVLEYELQYKEVNETKWKMMDPILTTSVPVYSLKVDKEYEVRVRSKQRNSGNYGEFSEVLYVTLPQMSQFTCEEDFYFPWLLIIIFGIFGLTVMLFVFLFSKQQRIKMLILPPVPVPKIKGIDPDLLKEGKLEEVNTILAIHDSYKPEFHSDDSWVEFIELDIDEPDEKTEESDTDRLLSSDHEKSHSNLGVKDGDSGRTSCCEPDILETDFNANDIHEGTSEVAQPQRLKGEADLLCLDQKNQNNSPYHDACPATQQPSVIQAEKNKPQPLPTEGAESTHQAAHIQLSNPSSLSNIDFYAQVSDITPAGSVVLSPGQKNKAGMSQCDMHPEMVSLCQENFLMDNAYFCEADAKKCIPVAPHIKVESHIQPSLNQEDIYITTESLTTAAGRPGTGEHVPGSEMPVPDYTSIHIVQSPQGLILNATALPLPDKEFLSSCGYVSTDQLNKIMP.

The first 18 residues, 1–18, serve as a signal peptide directing secretion; that stretch reads MDLWQLLLTLALAGSSDA. Over 19–264 the chain is Extracellular; it reads FSGSEATAAI…SQFTCEEDFY (246 aa). Residue Asn-46 is glycosylated (N-linked (GlcNAc...) asparagine). 2 cysteine pairs are disulfide-bonded: Cys-56-Cys-66 and Cys-101-Cys-112. Residue Asn-115 is glycosylated (N-linked (GlcNAc...) asparagine). A disulfide bridge connects residues Cys-126 and Cys-140. A Fibronectin type-III domain is found at 151 to 254; the sequence is PPIALNWTLL…EVLYVTLPQM (104 aa). N-linked (GlcNAc...) asparagine glycosylation is found at Asn-156, Asn-161, and Asn-200. A WSXWS motif motif is present at residues 240–244; it reads YGEFS. Residues 260-262 are required for ADAM17-mediated proteolysis; that stretch reads EED. Residues 265 to 288 form a helical membrane-spanning segment; that stretch reads FPWLLIIIFGIFGLTVMLFVFLFS. Topologically, residues 289-638 are cytoplasmic; the sequence is KQQRIKMLIL…STDQLNKIMP (350 aa). The segment at 294–379 is required for JAK2 binding; that stretch reads KMLILPPVPV…HEKSHSNLGV (86 aa). The short motif at 297 to 305 is the Box 1 motif element; that stretch reads ILPPVPVPK. The UbE motif motif lies at 340 to 349; the sequence is DSWVEFIELD. A Phosphoserine modification is found at Ser-341. The tract at residues 353–391 is disordered; sequence PDEKTEESDTDRLLSSDHEKSHSNLGVKDGDSGRTSCCE. Basic and acidic residues predominate over residues 362-384; that stretch reads TDRLLSSDHEKSHSNLGVKDGDS. Tyr-487 and Tyr-595 each carry phosphotyrosine; by JAK2.

This sequence belongs to the type I cytokine receptor family. Type 1 subfamily. In terms of assembly, on growth hormone (GH) binding, forms homodimers and binds JAK2 via a box 1-containing domain. Post-translationally, the soluble form (GHBP) is produced by phorbol ester-promoted proteolytic cleavage at the cell surface (shedding) by ADAM17/TACE. Shedding is inhibited by growth hormone (GH) binding to the receptor probably due to a conformational change in GHR rendering the receptor inaccessible to ADAM17. In terms of processing, on GH binding, phosphorylated on tyrosine residues in the cytoplasmic domain by JAK2. Ubiquitinated by the ECS(SOCS2) complex following ligand-binding and phosphorylation by JAK2, leading to its degradation by the proteasome. Regulation by the ECS(SOCS2) complex acts as a negative feedback loop of growth hormone receptor signaling. Ubiquitination is not sufficient for GHR internalization. Expressed in various tissues with high expression in liver and skeletal muscle. As to expression, isoform 2 is expressed in lung, stomach and muscle. In terms of tissue distribution, predominantly expressed in kidney, bladder, adrenal gland and brain stem. Highly expressed in placental villi.

It localises to the cell membrane. It is found in the secreted. Receptor for pituitary gland growth hormone (GH1) involved in regulating postnatal body growth. On ligand binding, couples to the JAK2/STAT5 pathway. In terms of biological role, the soluble form (GHBP) acts as a reservoir of growth hormone in plasma and may be a modulator/inhibitor of GH signaling. Its function is as follows. Up-regulates the production of the soluble Growth hormone-binding protein form (GHBP) and acts as a negative inhibitor of growth hormone signaling. The protein is Growth hormone receptor (GHR) of Homo sapiens (Human).